The sequence spans 141 residues: Hemoglobin subunit alpha (141 aa).

The Globin domain maps to 1-141 (VLSPADKTNV…VSTVLTSKYR (141 aa)). Serine 3 is modified (phosphoserine). The residue at position 7 (lysine 7) is an N6-succinyllysine. At threonine 8 the chain carries Phosphothreonine. Residue lysine 11 is modified to N6-succinyllysine. The residue at position 16 (lysine 16) is an N6-acetyllysine; alternate. At lysine 16 the chain carries N6-succinyllysine; alternate. Phosphotyrosine is present on tyrosine 24. An N6-succinyllysine modification is found at lysine 40. Position 49 is a phosphoserine (serine 49). Histidine 58 lines the O2 pocket. Histidine 87 provides a ligand contact to heme b. The residue at position 102 (serine 102) is a Phosphoserine. Threonine 108 bears the Phosphothreonine mark. Serine 124 carries the post-translational modification Phosphoserine. Phosphothreonine occurs at positions 134 and 137. A Phosphoserine modification is found at serine 138.

It belongs to the globin family. In terms of assembly, heterotetramer of two alpha chains and two beta chains. In terms of tissue distribution, red blood cells.

In terms of biological role, involved in oxygen transport from the lung to the various peripheral tissues. Functionally, hemopressin acts as an antagonist peptide of the cannabinoid receptor CNR1. Hemopressin-binding efficiently blocks cannabinoid receptor CNR1 and subsequent signaling. The chain is Hemoglobin subunit alpha (HBA) from Phoca vitulina (Harbor seal).